The sequence spans 457 residues: D-hydantoinase (457 aa).

Positions 57 and 59 each coordinate Zn(2+). Serine 69 bears the Phosphoserine mark. Residue lysine 148 coordinates Zn(2+). Residue lysine 148 is modified to N6-carboxylysine. Residue tyrosine 153 coordinates substrate. The Zn(2+) site is built by histidine 181 and histidine 237. Threonine 286 serves as a coordination point for substrate. Aspartate 313 provides a ligand contact to Zn(2+). A substrate-binding site is contributed by asparagine 335.

Belongs to the metallo-dependent hydrolases superfamily. Hydantoinase/dihydropyrimidinase family. As to quaternary structure, homodimer and homotetramer. It depends on Zn(2+) as a cofactor. In terms of processing, carboxylation allows a single lysine to coordinate two zinc ions.

Its function is as follows. Catalyzes the stereospecific hydrolysis of the cyclic amide bond of D-hydantoin derivatives. The chain is D-hydantoinase (hyuA) from Ralstonia pickettii (Burkholderia pickettii).